The chain runs to 200 residues: Probable molybdenum cofactor guanylyltransferase (200 aa).

GTP-binding positions include 9 to 11 (LAG), Lys-21, Asp-69, and Asp-100. Asp-100 is a Mg(2+) binding site.

Belongs to the MobA family. The cofactor is Mg(2+).

The protein resides in the cytoplasm. The catalysed reaction is Mo-molybdopterin + GTP + H(+) = Mo-molybdopterin guanine dinucleotide + diphosphate. In terms of biological role, transfers a GMP moiety from GTP to Mo-molybdopterin (Mo-MPT) cofactor (Moco or molybdenum cofactor) to form Mo-molybdopterin guanine dinucleotide (Mo-MGD) cofactor. This is Probable molybdenum cofactor guanylyltransferase from Bacillus cereus (strain ZK / E33L).